The primary structure comprises 298 residues: Elongation factor Ts (298 aa).

The tract at residues 79-82 (TDFV) is involved in Mg(2+) ion dislocation from EF-Tu.

It belongs to the EF-Ts family.

The protein resides in the cytoplasm. Its function is as follows. Associates with the EF-Tu.GDP complex and induces the exchange of GDP to GTP. It remains bound to the aminoacyl-tRNA.EF-Tu.GTP complex up to the GTP hydrolysis stage on the ribosome. The chain is Elongation factor Ts (tsf) from Mycoplasma pneumoniae (strain ATCC 29342 / M129 / Subtype 1) (Mycoplasmoides pneumoniae).